Here is a 117-residue protein sequence, read N- to C-terminus: Ribosomal silencing factor RsfS (117 aa).

The protein belongs to the Iojap/RsfS family. Interacts with ribosomal protein uL14 (rplN).

The protein localises to the cytoplasm. Functions as a ribosomal silencing factor. Interacts with ribosomal protein uL14 (rplN), blocking formation of intersubunit bridge B8. Prevents association of the 30S and 50S ribosomal subunits and the formation of functional ribosomes, thus repressing translation. The polypeptide is Ribosomal silencing factor RsfS (Halalkalibacterium halodurans (strain ATCC BAA-125 / DSM 18197 / FERM 7344 / JCM 9153 / C-125) (Bacillus halodurans)).